The primary structure comprises 286 residues: Shikimate dehydrogenase (NADP(+)) (286 aa).

Shikimate is bound by residues serine 22–serine 24 and threonine 71. The active-site Proton acceptor is lysine 75. Residue glutamate 87 coordinates NADP(+). Positions 96 and 111 each coordinate shikimate. NADP(+) is bound by residues glycine 136–alanine 140, asparagine 160–arginine 165, and isoleucine 225. Tyrosine 227 contributes to the shikimate binding site. Glycine 248 contributes to the NADP(+) binding site.

It belongs to the shikimate dehydrogenase family. In terms of assembly, homodimer.

It catalyses the reaction shikimate + NADP(+) = 3-dehydroshikimate + NADPH + H(+). The protein operates within metabolic intermediate biosynthesis; chorismate biosynthesis; chorismate from D-erythrose 4-phosphate and phosphoenolpyruvate: step 4/7. Its function is as follows. Involved in the biosynthesis of the chorismate, which leads to the biosynthesis of aromatic amino acids. Catalyzes the reversible NADPH linked reduction of 3-dehydroshikimate (DHSA) to yield shikimate (SA). This chain is Shikimate dehydrogenase (NADP(+)), found in Rhizobium meliloti (strain 1021) (Ensifer meliloti).